The sequence spans 56 residues: Potassium channel toxin alpha-KTx 9.8 (56 aa).

The first 19 residues, Met1 to Ala19, serve as a signal peptide directing secretion. A propeptide spanning residues Ile20 to Ala28 is cleaved from the precursor. 3 disulfides stabilise this stretch: Cys31–Cys47, Cys34–Cys52, and Cys38–Cys54.

It belongs to the short scorpion toxin superfamily. Potassium channel inhibitor family. Alpha-KTx 09 subfamily. In terms of tissue distribution, expressed by the venom gland.

The protein resides in the secreted. Its function is as follows. Potassium channel inhibitor. The sequence is that of Potassium channel toxin alpha-KTx 9.8 from Buthus israelis (Israeli scorpion).